Reading from the N-terminus, the 186-residue chain is Serine hydrolase RBBP9 (186 aa).

The retinoblastoma protein binding stretch occupies residues 56-70; that stretch reads LPFMETELHCDEKTI. The segment at 63 to 67 is involved in binding to RB1; it reads LHCDE. Active-site charge relay system residues include S75, D138, and H165.

Belongs to the RBBP9 family. In terms of assembly, interacts with RB1; the interaction disrupts RB1 binding to E2F1. Interacts with RBL1 and RBL2. Expressed in spleen.

The catalysed reaction is valacyclovir + H2O = acyclovir + L-valine + H(+). Functionally, serine hydrolase. Catalyzes the hydrolytic activation of amino acid ester of the antiviral prodrug valacyclovir to its corresponding active drug, acyclovir. May negatively regulate basal or autocrine TGF-beta signaling by suppressing SMAD2-SMAD3 phosphorylation. May play a role in the transformation process due to its capacity to confer resistance to the growth-inhibitory effects of TGF-beta through interaction with RB1 and the subsequent displacement of E2F1. The chain is Serine hydrolase RBBP9 (Rbbp9) from Mus musculus (Mouse).